Here is a 449-residue protein sequence, read N- to C-terminus: GTPase Der (449 aa).

EngA-type G domains are found at residues 3 to 167 and 178 to 351; these read AVIA…PTSE and PRIA…IDSR. GTP contacts are provided by residues 9–16, 56–60, 119–122, 184–191, 231–235, and 296–299; these read GRPNVGKS, DTGGF, NKMD, DTAGM, and NKWD. Residues 352–436 enclose the KH-like domain; the sequence is RHFSTAELNR…PLRLVFRQGE (85 aa).

This sequence belongs to the TRAFAC class TrmE-Era-EngA-EngB-Septin-like GTPase superfamily. EngA (Der) GTPase family. In terms of assembly, associates with the 50S ribosomal subunit.

In terms of biological role, GTPase that plays an essential role in the late steps of ribosome biogenesis. This is GTPase Der from Acidithiobacillus ferrooxidans (strain ATCC 23270 / DSM 14882 / CIP 104768 / NCIMB 8455) (Ferrobacillus ferrooxidans (strain ATCC 23270)).